The following is a 108-amino-acid chain: UPF0060 membrane protein Mflv_3127 (108 aa).

4 consecutive transmembrane segments (helical) span residues 7–27, 32–52, 61–81, and 87–107; these read LLFV…WQGF, GWLW…VAAF, VLAA…MVAD, and RWDI…MYAP.

It belongs to the UPF0060 family.

It is found in the cell membrane. In Mycolicibacterium gilvum (strain PYR-GCK) (Mycobacterium gilvum (strain PYR-GCK)), this protein is UPF0060 membrane protein Mflv_3127.